The chain runs to 127 residues: UPF0102 protein Paes_0016 (127 aa).

It belongs to the UPF0102 family.

This Prosthecochloris aestuarii (strain DSM 271 / SK 413) protein is UPF0102 protein Paes_0016.